Reading from the N-terminus, the 625-residue chain is MSSSHNRSNNNNSEGAKAEQIIFEFFAKSLHIILESRTPFMSSRNFSGEQMICSPSSSSSSSSSVRPRDKWFNLALRECPAALESFDIGRRSSLEPLVVDVVLVVRPLVGDQSGKRELIRNFSGKDYQSGWNSDQDELGCETKNEQIIERWVVQYDNRKIRESVTTSSRRSSSNKLQVMYKKATLLLRSLFVMVRLLPAYKIFRELNSSGQIFKFKLVPRVPSIVEPFTRKEEAEMQKFSFTPVETICGRLCLSVLYRSLSDVSCEHSTPMSPTFITDYVGSPLADPLKRFPSLPLSYGSPPLLPFQRRHSWSFDRYKASPPSVSCSPSPTRSDSHALVSHPCSRHLPPHPSDIPTGRRKESYPEEYSPCQDFSPPPSPSAPKHAVPRGITRTESAPVRIPAPTFQSKENVVAPSAHLKLSRHASLKPVRNLGPGESGAAIDKLFLYGRDDFRRPSGVRPSSSSSPRISFSRSSSRSFQDDFDDPDFPCPFDVEYDDITDRNSRPGSFDHRGDIHEPFDSSGSYPKKSQDAAVGALVRMLKKAPPLRQDVSESSRPEICSNNNKPAGAHEIAVASITASGIALASKTTADALEELRSYKEMKNHLLLGQSTSNPSSVTITSPFDV.

Low complexity-rich tracts occupy residues 322 to 332 (PSVSCSPSPTR) and 455 to 477 (PSGV…SSRS). Disordered regions lie at residues 322 to 388 (PSVS…AVPR), 452 to 527 (FRRP…YPKK), and 544 to 564 (PPLR…NNNK). The span at 498 to 518 (ITDRNSRPGSFDHRGDIHEPF) shows a compositional bias: basic and acidic residues.

It belongs to the ATG13 family. Plant subfamily.

The protein localises to the cytoplasmic vesicle. It is found in the autophagosome. Its function is as follows. Involved in autophagy in a nutritional condition dependent manner. The ATG1-ATG13 protein kinase complex regulates downstream events required for autophagosome enclosure and/or vacuolar delivery. Becomes a target of autophagy under nutrient starvation. Connects autophagy to plant nutritional status. The polypeptide is Autophagy-related protein 13b (Arabidopsis thaliana (Mouse-ear cress)).